Consider the following 1017-residue polypeptide: A-type ATP synthase subunit A (1017 aa).

The DOD-type homing endonuclease domain occupies Phe-396–Ile-529.

The protein belongs to the ATPase alpha/beta chains family. In terms of assembly, has multiple subunits with at least A(3), B(3), C, D, E, F, H, I and proteolipid K(x). Post-translationally, this protein undergoes a protein self splicing that involves a post-translational excision of the VDE intervening region (intein) followed by peptide ligation.

It is found in the cell membrane. It catalyses the reaction ATP + H2O + 4 H(+)(in) = ADP + phosphate + 5 H(+)(out). Its function is as follows. Component of the A-type ATP synthase that produces ATP from ADP in the presence of a proton gradient across the membrane. The A chain is the catalytic subunit. In Pyrococcus abyssi (strain GE5 / Orsay), this protein is A-type ATP synthase subunit A.